The sequence spans 1585 residues: Histone acetyltransferase lsy-12 (1585 aa).

Disordered regions lie at residues methionine 1 to glutamate 37 and glycine 279 to valine 491. Residues proline 23 to glutamate 37 are compositionally biased toward basic and acidic residues. Polar residues predominate over residues glycine 279–serine 296. Residues threonine 302–arginine 312 are compositionally biased toward basic and acidic residues. 2 stretches are compositionally biased toward polar residues: residues leucine 355–valine 364 and serine 411–leucine 426. Residues serine 431–serine 440 are compositionally biased toward low complexity. Positions glutamine 453 to lysine 469 are enriched in basic residues. Residues glutamine 477 to valine 491 are compositionally biased toward acidic residues. Positions glutamate 544–proline 830 constitute an MYST-type HAT domain. The C2HC MYST-type zinc finger occupies leucine 577–leucine 602. Position 644 is an N6-acetyllysine; by autocatalysis (lysine 644). Residue serine 685–threonine 689 participates in acetyl-CoA binding. The Proton donor/acceptor role is filled by glutamate 720. Acetyl-CoA is bound by residues serine 724 and lysine 815. Composition is skewed to basic and acidic residues over residues serine 844–arginine 855 and valine 947–glutamate 956. Disordered regions lie at residues serine 844–glutamate 903, glutamate 927–serine 1262, glutamate 1286–histidine 1373, and histidine 1431–glutamine 1507. The segment covering asparagine 977–glycine 999 has biased composition (polar residues). Positions threonine 1011 to aspartate 1022 are enriched in acidic residues. A compositionally biased stretch (basic and acidic residues) spans aspartate 1029–serine 1046. Basic residues predominate over residues arginine 1047–alanine 1060. Basic and acidic residues-rich tracts occupy residues valine 1070 to asparagine 1081 and aspartate 1135 to arginine 1151. A compositionally biased stretch (low complexity) spans proline 1164–proline 1173. A compositionally biased stretch (polar residues) spans leucine 1185–glutamine 1194. Basic and acidic residues predominate over residues asparagine 1196 to proline 1207. 2 stretches are compositionally biased toward polar residues: residues alanine 1298 to proline 1317 and histidine 1324 to proline 1333. The span at glutamine 1482–glutamine 1493 shows a compositional bias: low complexity.

This sequence belongs to the MYST (SAS/MOZ) family.

It carries out the reaction L-lysyl-[protein] + acetyl-CoA = N(6)-acetyl-L-lysyl-[protein] + CoA + H(+). Its function is as follows. Probable histone acetyltransferase. Required to initiate and then maintain lateralized gene expression in the ASE sensory neurons. Involved in determining cell fate in the ASE neurons. This is Histone acetyltransferase lsy-12 from Caenorhabditis elegans.